A 451-amino-acid polypeptide reads, in one-letter code: Tubulin alpha-1B chain (451 aa).

Positions 1–4 (MREC) match the MREC motif motif. Positions 10, 11, 12, and 15 each coordinate GTP. K40 is modified (N6,N6,N6-trimethyllysine; alternate). K40 carries the N6-acetyllysine; alternate modification. S48 is subject to Phosphoserine. GTP is bound by residues E71, A99, S140, G143, G144, T145, G146, T179, E183, N206, Y224, and N228. Residue E71 participates in Mg(2+) binding. Residue S232 is modified to Phosphoserine. L252 is a binding site for GTP. The active site involves E254. The residue at position 282 (Y282) is a 3'-nitrotyrosine. Residue K326 forms a Glycyl lysine isopeptide (Lys-Gly) (interchain with G-Cter in ubiquitin) linkage. Position 339 is an omega-N-methylarginine (R339). K370 participates in a covalent cross-link: Glycyl lysine isopeptide (Lys-Gly) (interchain with G-Cter in ubiquitin). A disordered region spans residues 432–451 (YEEVGVDSVEGEGEEEGEEY). S439 bears the Phosphoserine mark. Residues E443 and E445 each carry the 5-glutamyl polyglutamate modification. 3'-nitrotyrosine is present on Y451.

It belongs to the tubulin family. As to quaternary structure, heterodimer of alpha- and beta-tubulin. A typical microtubule is a hollow water-filled tube with an outer diameter of 25 nm and an inner diameter of 15 nM. Alpha-beta heterodimers associate head-to-tail to form protofilaments running lengthwise along the microtubule wall with the beta-tubulin subunit facing the microtubule plus end conferring a structural polarity. Microtubules usually have 13 protofilaments but different protofilament numbers can be found in some organisms and specialized cells. Interacts with gamma-tubulin; the interaction allows microtubules to nucleate from the gamma-tubulin ring complex (gTuRC). Nascent microtubule interacts (via alpha-tubulin MREC motif) with TTC5/STRAP; this interaction may result in tubulin mRNA-targeted degradation. Component of sperm flagellar doublet microtubules. It depends on Mg(2+) as a cofactor. In terms of processing, some glutamate residues at the C-terminus are polyglutamylated, resulting in polyglutamate chains on the gamma-carboxyl group. Polyglutamylation plays a key role in microtubule severing by spastin (SPAST). SPAST preferentially recognizes and acts on microtubules decorated with short polyglutamate tails: severing activity by SPAST increases as the number of glutamates per tubulin rises from one to eight, but decreases beyond this glutamylation threshold. Glutamylation is also involved in cilia motility. Some glutamate residues at the C-terminus are monoglycylated but not polyglycylated due to the absence of functional TTLL10 in human. Monoglycylation is mainly limited to tubulin incorporated into cilia and flagella axonemes, which is required for their stability and maintenance. Flagella glycylation controls sperm motility. Both polyglutamylation and monoglycylation can coexist on the same protein on adjacent residues, and lowering glycylation levels increases polyglutamylation, and reciprocally. Post-translationally, acetylation of alpha chains at Lys-40 is located inside the microtubule lumen. This modification has been correlated with increased microtubule stability, intracellular transport and ciliary assembly. In terms of processing, methylation of alpha chains at Lys-40 is found in mitotic microtubules and is required for normal mitosis and cytokinesis contributing to genomic stability. Nitration of Tyr-451 is irreversible and interferes with normal dynein intracellular distribution. Post-translationally, undergoes a tyrosination/detyrosination cycle, the cyclic removal and re-addition of a C-terminal tyrosine residue by the enzymes tubulin tyrosine carboxypeptidase (MATCAP1/KIAA0895L, VASH1 or VASH2) and tubulin tyrosine ligase (TTL), respectively. In terms of processing, tyrosination promotes microtubule interaction with CAP-Gly domain-containing proteins such as CLIP1, CLIP2 and DCTN1. Tyrosination regulates the initiation of dynein-dynactin motility via interaction with DCTN1, which brings the dynein-dynactin complex into contact with microtubules. In neurons, tyrosinated tubulins mediate the initiation of retrograde vesicle transport. Detyrosination is involved in metaphase plate congression by guiding chromosomes during mitosis: detyrosination promotes interaction with CENPE, promoting pole-proximal transport of chromosomes toward the equator. Detyrosination increases microtubules-dependent mechanotransduction in dystrophic cardiac and skeletal muscle. In cardiomyocytes, detyrosinated microtubules are required to resist to contractile compression during contraction: detyrosination promotes association with desmin (DES) at force-generating sarcomeres, leading to buckled microtubules and mechanical resistance to contraction.

The protein resides in the cytoplasm. It is found in the cytoskeleton. The catalysed reaction is GTP + H2O = GDP + phosphate + H(+). Functionally, tubulin is the major constituent of microtubules, protein filaments consisting of alpha- and beta-tubulin heterodimers. Microtubules grow by the addition of GTP-tubulin dimers to the microtubule end, where a stabilizing cap forms. Below the cap, tubulin dimers are in GDP-bound state, owing to GTPase activity of alpha-tubulin. The sequence is that of Tubulin alpha-1B chain (TUBA1B) from Homo sapiens (Human).